The following is a 185-amino-acid chain: Sarcoplasmic calcium-binding proteins II, V, VI, and VII (185 aa).

4 EF-hand domains span residues 5-41 (FQKQ…YKEV), 57-92 (SLED…TIAT), 102-137 (WCQN…FQLQ), and 138-173 (CADV…TSPA). Aspartate 19, asparagine 21, aspartate 23, serine 25, aspartate 30, aspartate 70, asparagine 72, aspartate 74, glutamate 81, aspartate 115, serine 117, aspartate 119, and glutamate 126 together coordinate Ca(2+).

Functionally, like parvalbumins, SCPs seem to be more abundant in fast contracting muscles, but no functional relationship can be established from this distribution. The polypeptide is Sarcoplasmic calcium-binding proteins II, V, VI, and VII (Branchiostoma lanceolatum (Common lancelet)).